A 389-amino-acid chain; its full sequence is MEKTSMFSIHEGKPIRCKAAVSRKPGEALVIEEIHVDPPQAYEVRIKIICTSLCHTDVSFSKIDSGPLARFPRILGHEAVGVIESIGEHVNGFQQGDVVLPVFHPHCEECRDCKSSKSNWCARFADDFLSNTRRYGMTSRFKDSFGEDIYHFLFVSSFSEYTVVDIAHLVKISPDIPVDKAALLSCGVSTGIGAAWKVANVEKGSTVAVFGLGAVGLAVGEGARLRGAGKIIGVDLNPEKFELGKKFGFTDFINSTLCGENKISEVIKEMTGGGVDYSFECVGLPSLLTEAFSSTRTGSGKTVVLGIDKHLTPVSLGSFDLLRGRHVCGSLFGGLKPKLDIPILVDHYLKKELNLDSFITHELKFEEINKAFDLLVQGKSLRCILWMNK.

Zn(2+)-binding residues include C54, T56, H77, C107, C110, C113, C121, and C186. Positions 56 and 77 each coordinate an alcohol. Residue T56 coordinates NAD(+). Residues 211 to 216, D235, K240, 305 to 307, F332, and R382 contribute to the NAD(+) site; these read GLGAVG and LGI.

This sequence belongs to the zinc-containing alcohol dehydrogenase family. Class-III subfamily. Homodimer. Requires Zn(2+) as cofactor.

The protein resides in the cytoplasm. It catalyses the reaction a primary alcohol + NAD(+) = an aldehyde + NADH + H(+). The catalysed reaction is a secondary alcohol + NAD(+) = a ketone + NADH + H(+). The protein is Alcohol dehydrogenase-like 5 of Arabidopsis thaliana (Mouse-ear cress).